A 417-amino-acid polypeptide reads, in one-letter code: MTSITANQKPSKLVPPHGSPELKPLLLNGDALNQALKLASTLPTITLSSRERGDLIMFGIGGFTPLNGFMNQADWQGVVDNMRLQSGDNAGLFWPIPITLSAPKATADSLNAGDKVALVAQDGEIMGILTVEETYTIDKEHECQQVFTTTDPEHPGVQQVLEQSEVNIAGSVEVLSEGEFPTLYPEIYKTPAETREILDNKGWQTVAAFQTRNPMHRSHEYLAKIAIEICDGVLIHSLLGALKPGDIPADVRQEAIKSLIDNYFRQDTVIQAGYPLDMRYAGPREALLHALFRQNYGCSHLIVGRDHAGVGDYYGAFDAQTIFDHVGKDDLITQPLKIGWTFWCNACNAMASDKTCPHDASEHVKVSGTKLRKALSEDEDVPDNFSRPEVLQILRDYYAGIAFDERAEVKLVGASAV.

Residues 1 to 10 (MTSITANQKP) are compositionally biased toward polar residues. Residues 1-20 (MTSITANQKPSKLVPPHGSP) are disordered.

It belongs to the sulfate adenylyltransferase family.

The enzyme catalyses sulfate + ATP + H(+) = adenosine 5'-phosphosulfate + diphosphate. The protein operates within sulfur metabolism; hydrogen sulfide biosynthesis; sulfite from sulfate: step 1/3. In Psychrobacter arcticus (strain DSM 17307 / VKM B-2377 / 273-4), this protein is Sulfate adenylyltransferase.